Reading from the N-terminus, the 507-residue chain is Pyridoxine 4-oxidase (507 aa).

Histidine 448 (proton acceptor) is an active-site residue.

It belongs to the GMC oxidoreductase family. As to quaternary structure, monomer. Requires FAD as cofactor.

It carries out the reaction pyridoxine + O2 = pyridoxal + H2O2. The protein operates within cofactor degradation; B6 vitamer degradation; pyridoxal from pyridoxine (oxidase route): step 1/1. The sequence is that of Pyridoxine 4-oxidase (pno) from Microbacterium luteolum (Aureobacterium luteolum).